The primary structure comprises 176 residues: Putative L,D-transpeptidase YqjB (176 aa).

Positions 1-25 (MRFFLCSIFMMISPIWPLGENPLPG) are cleaved as a signal peptide. In terms of domain architecture, L,D-TPase catalytic spans 27 to 151 (PYVIVNKRTN…IPVGTRVLIT (125 aa)). Residue His111 is the Proton donor/acceptor of the active site. The active-site Nucleophile is the Cys127.

Belongs to the YkuD family.

Its pathway is cell wall biogenesis; peptidoglycan biosynthesis. This Bacillus subtilis (strain 168) protein is Putative L,D-transpeptidase YqjB (yqjB).